The following is a 524-amino-acid chain: Mitochondrial-processing peptidase subunit alpha (524 aa).

A mitochondrion-targeting transit peptide spans 1–32 (MATAVWAAARLLRGSAALCARPKFGSPAHRRF). At lysine 63 the chain carries N6-succinyllysine.

It belongs to the peptidase M16 family. As to quaternary structure, heterodimer of PMPCA (alpha) and PMPCB (beta) subunits, forming the mitochondrial processing protease (MPP) in which PMPCA is involved in substrate recognition and binding and PMPCB is the catalytic subunit.

It localises to the mitochondrion matrix. The protein resides in the mitochondrion inner membrane. Substrate recognition and binding subunit of the essential mitochondrial processing protease (MPP), which cleaves the mitochondrial sequence off newly imported precursors proteins. The sequence is that of Mitochondrial-processing peptidase subunit alpha (Pmpca) from Rattus norvegicus (Rat).